The sequence spans 287 residues: uncharacterized protein (287 aa).

Residues threonine 43 and tyrosine 104 each act as charge relay system in the active site. Tyrosine 130 functions as the Proton donor in the catalytic mechanism. Residue lysine 158 is the Schiff-base intermediate with substrate of the active site.

This sequence belongs to the DapA family. As to quaternary structure, homotetramer.

Its subcellular location is the cytoplasm. This is an uncharacterized protein from Pyrococcus horikoshii (strain ATCC 700860 / DSM 12428 / JCM 9974 / NBRC 100139 / OT-3).